The sequence spans 416 residues: Probable histone-binding protein lin-53 (416 aa).

WD repeat units follow at residues N118–K158, G170–G210, G220–A260, A263–H303, S307–T347, and G364–V404.

This sequence belongs to the WD repeat RBAP46/RBAP48/MSI1 family. Binds directly to helix 1 of the histone fold of histone H4, a region that is not accessible when H4 is in chromatin. Probable component of a NuRD-like complex, composed of at least lin-53 and hda-1. Interacts with lin-35. Interacts with hda-1; the interaction is direct. Component of the DRM complex, at least composed of lin-9, lin-35, lin-37, lin-52, lin-53, lin-54- dpl-1 and efl-1. Interacts with hcp-3.

It is found in the nucleus. It localises to the chromosome. The protein resides in the centromere. Core histone-binding subunit that may target chromatin assembly factors, chromatin remodeling factors and histone deacetylases to their histone substrates in a manner that is regulated by nucleosomal DNA. Required for hcp-3 and his-1 stabilization, localization of hcp-3 to centromeres and for proper chromosome segregation. Synthetic multivulva class B (synMuvB) protein. SynMuvB proteins are required to repress the induction of vulval development by Ras signaling and probably act by forming the multiprotein DRM complex that represses transcription. This is Probable histone-binding protein lin-53 from Caenorhabditis briggsae.